A 256-amino-acid chain; its full sequence is Protein FixA (256 aa).

Belongs to the ETF beta-subunit/FixA family. As to quaternary structure, heterodimer of FixA and FixB.

The protein operates within amine and polyamine metabolism; carnitine metabolism. Required for anaerobic carnitine reduction. May bring reductant to CaiA. The sequence is that of Protein FixA from Salmonella agona (strain SL483).